We begin with the raw amino-acid sequence, 289 residues long: MKIKTKQFRVGEGEKVDLGKWPTKVDPFYESKEHYHELLRTQVERLSDLQQLLYASNRHAVLLIFQAMDAAGKDGVIRHVLSGINPQGCQVFSFKHPSATELQHDFLWRTTRDLPERGRIGVFNRSYYEEVLIVRVHPDILQSEAVPNGENFGKSFWHKRYRSIRNLEQHLHANGTRIVKFFLHLSKDEQRKRFLARIDEPEKNWKFSAADLEERQYWDDYMDAYEKCLSETSSEDSPWYAVPADDKENARLIVSQVIAETMESLKMSYPETTPARRKELLQMRQQLLK.

Belongs to the polyphosphate kinase 2 (PPK2) family. Class I subfamily.

It carries out the reaction [phosphate](n) + ATP = [phosphate](n+1) + ADP. Uses inorganic polyphosphate (polyP) as a donor to convert ADP to ATP. The chain is ADP-polyphosphate phosphotransferase from Rhodopseudomonas palustris (strain ATCC BAA-98 / CGA009).